The sequence spans 85 residues: UPF0386 protein Meso_1721 (85 aa).

The protein belongs to the UPF0386 family.

The sequence is that of UPF0386 protein Meso_1721 from Chelativorans sp. (strain BNC1).